The primary structure comprises 93 residues: Small ribosomal subunit protein uS19 (93 aa).

It belongs to the universal ribosomal protein uS19 family.

Protein S19 forms a complex with S13 that binds strongly to the 16S ribosomal RNA. This Arthrobacter sp. (strain FB24) protein is Small ribosomal subunit protein uS19.